Reading from the N-terminus, the 89-residue chain is Mitochondrial import inner membrane translocase subunit Tim9 (89 aa).

An N-acetylalanine modification is found at Ala2. Positions 28-52 (CFLDCVKDFTTREVKPEEVTCSEHC) match the Twin CX3C motif motif. 2 disulfide bridges follow: Cys28/Cys52 and Cys32/Cys48.

Belongs to the small Tim family. As to quaternary structure, heterohexamer; composed of 3 copies of TIMM9 and 3 copies of TIMM10/TIM10A, named soluble 70 kDa complex. The complex forms a 6-bladed alpha-propeller structure and associates with the TIMM22 component of the TIM22 complex. Interacts with multi-pass transmembrane proteins in transit. Also forms a complex composed of TIMM9, TIMM10/TIM10A and FXC1/TIM10B.

It localises to the mitochondrion inner membrane. Its function is as follows. Mitochondrial intermembrane chaperone that participates in the import and insertion of multi-pass transmembrane proteins into the mitochondrial inner membrane. May also be required for the transfer of beta-barrel precursors from the TOM complex to the sorting and assembly machinery (SAM complex) of the outer membrane. Acts as a chaperone-like protein that protects the hydrophobic precursors from aggregation and guide them through the mitochondrial intermembrane space. This Rattus norvegicus (Rat) protein is Mitochondrial import inner membrane translocase subunit Tim9 (Timm9).